The chain runs to 807 residues: Nucleolar complex protein 3 homolog (807 aa).

Disordered stretches follow at residues lysine 27–aspartate 93 and glutamate 167–glutamate 191. The segment covering lysine 40–glutamine 51 has biased composition (basic residues). A compositionally biased stretch (basic and acidic residues) spans alanine 52 to arginine 78. 2 stretches are compositionally biased toward acidic residues: residues glutamate 79–aspartate 93 and glutamine 174–isoleucine 190. Lysine 332 is covalently cross-linked (Glycyl lysine isopeptide (Lys-Gly) (interchain with G-Cter in SUMO2)). The stretch at phenylalanine 449–leucine 489 forms a coiled coil.

It belongs to the CBF/MAK21 family.

Its subcellular location is the nucleus. The protein resides in the nucleolus. The protein localises to the nucleus speckle. Functionally, may be required for adipogenesis. This Mus musculus (Mouse) protein is Nucleolar complex protein 3 homolog (Noc3l).